The sequence spans 316 residues: CXXC-type zinc finger protein 5 (316 aa).

The span at 1 to 10 shows a compositional bias: gly residues; the sequence is MSSLGGGSQD. Residues 1–95 are disordered; sequence MSSLGGGSQD…SGGAGSMMGG (95 aa). Composition is skewed to low complexity over residues 11-27 and 36-50; these read AGGS…SGSG and SATV…VADD. Residues 250–291 form a CXXC-type zinc finger; the sequence is GKKKRKRCGMCAPCRRRINCEQCSSCRNRKTGHQICKFRKCE. The Nuclear localization signal motif lies at 251-256; sequence KKKRKR. C257, C260, C263, C269, C272, C275, C285, and C290 together coordinate Zn(2+).

Interacts with DVL1. Interacts with RBPJ. Expressed in neural stem cells (at protein level). Expressed in the dorsal telencephalon.

The protein localises to the nucleus. It is found in the cytoplasm. In terms of biological role, may indirectly participate in activation of the NF-kappa-B and MAPK pathways. Required for DNA damage-induced ATM phosphorylation, p53 activation and cell cycle arrest. Involved in myelopoiesis. Acts as a mediator of BMP4-mediated modulation of canonical Wnt signaling activity in neural stem cells. Binds to the oxygen responsive element of COX4I2 and represses its transcription under hypoxia conditions (4% oxygen), as well as normoxia conditions (20% oxygen). May repress COX4I2 transactivation induced by CHCHD2 and RBPJ. Binds preferentially to DNA containing cytidine-phosphate-guanosine (CpG) dinucleotides over CpH (H=A, T, and C), hemimethylated-CpG and hemimethylated-hydroxymethyl-CpG. This Rattus norvegicus (Rat) protein is CXXC-type zinc finger protein 5 (Cxxc5).